The following is a 372-amino-acid chain: Cytochrome b (372 aa).

4 helical membrane-spanning segments follow: residues 25 to 45, 69 to 90, 105 to 125, and 170 to 190; these read FGSMLLTCSALQIMTGFFLSM, WMMQNLHAIGASMFFICVYIHV, WLSGTTLLIMLMATAFFGYVL, and FFALHFILPFGIISLSSLHIM. Heme b is bound by residues histidine 75 and histidine 89. Residues histidine 174 and histidine 188 each contribute to the heme b site. An a ubiquinone-binding site is contributed by histidine 193. 4 consecutive transmembrane segments (helical) span residues 218–238, 280–300, 312–332, and 339–358; these read YKDLFMISSMIMIMLLTISFI, LGGALALAMSITILLTVPFTH, FMQLMFWTLVTTFMIITWTAT, and YTMISQVTSSLYFMFFMSNP.

This sequence belongs to the cytochrome b family. The cytochrome bc1 complex contains 3 respiratory subunits (MT-CYB, CYC1 and UQCRFS1), 2 core proteins (UQCRC1 and UQCRC2) and probably 6 low-molecular weight proteins. Heme b serves as cofactor.

It localises to the mitochondrion inner membrane. Functionally, component of the ubiquinol-cytochrome c reductase complex (complex III or cytochrome b-c1 complex) that is part of the mitochondrial respiratory chain. The b-c1 complex mediates electron transfer from ubiquinol to cytochrome c. Contributes to the generation of a proton gradient across the mitochondrial membrane that is then used for ATP synthesis. This Acrantophis dumerili (Dumeril's ground boa) protein is Cytochrome b (MT-CYB).